The sequence spans 160 residues: Cytochrome c-type biogenesis protein CcmE (160 aa).

Residues 1–8 (MSAPRKTR) are Cytoplasmic-facing. A helical; Signal-anchor for type II membrane protein membrane pass occupies residues 9–29 (LYAILAVICGAVLTVALTLYA). Residues 30–160 (LSSNIDLFYT…PAAVTEGKRL (131 aa)) are Periplasmic-facing. Heme-binding residues include histidine 130 and tyrosine 134.

This sequence belongs to the CcmE/CycJ family.

It is found in the cell inner membrane. In terms of biological role, heme chaperone required for the biogenesis of c-type cytochromes. Transiently binds heme delivered by CcmC and transfers the heme to apo-cytochromes in a process facilitated by CcmF and CcmH. This Pectobacterium carotovorum subsp. carotovorum (strain PC1) protein is Cytochrome c-type biogenesis protein CcmE.